A 112-amino-acid polypeptide reads, in one-letter code: MSRALLKFVRVSPTKARLIAREVQGMNAELALASLEFMPNKAAGIISKVIASAVANGDFEPEEVEITSCRVDKAAVMKRWRPRARGTASRIIKPTAHILVEVGPAKKDGEDA.

This sequence belongs to the universal ribosomal protein uL22 family. Part of the 50S ribosomal subunit.

In terms of biological role, this protein binds specifically to 23S rRNA; its binding is stimulated by other ribosomal proteins, e.g. L4, L17, and L20. It is important during the early stages of 50S assembly. It makes multiple contacts with different domains of the 23S rRNA in the assembled 50S subunit and ribosome. Functionally, the globular domain of the protein is located near the polypeptide exit tunnel on the outside of the subunit, while an extended beta-hairpin is found that lines the wall of the exit tunnel in the center of the 70S ribosome. The protein is Large ribosomal subunit protein uL22 of Sulfurovum sp. (strain NBC37-1).